Reading from the N-terminus, the 179-residue chain is Insulin-like growth factor 2 (179 aa).

The N-terminal stretch at 1–24 (MGITAGKSMLALLAFLAFASCCYA) is a signal peptide. The b stretch occupies residues 25-52 (AYRPSETLCGGELVDTLQFVCGDRGFYF). 3 cysteine pairs are disulfide-bonded: C33–C71, C45–C84, and C70–C75. Residues 53 to 64 (SRPSSRINRRSR) form a c region. The segment at 65-85 (GIVEECCFRSCDLALLETYCA) is a. The interval 86–91 (APAKSE) is d. Positions 92–179 (RDVSASTTVL…GGASSEASSD (88 aa)) are cleaved as a propeptide — e peptide. O-linked (GalNAc...) threonine glycosylation occurs at T106. The O-linked (GalNAc...) serine glycan is linked to S154. The interval 160 to 179 (ALPTQDPATHGGASSEASSD) is disordered. T163 carries an O-linked (GalNAc...) threonine glycan.

It belongs to the insulin family. In terms of assembly, interacts with MYORG; this interaction is required for IGF2 secretion. Interacts with integrins ITGAV:ITGB3 and ITGA6:ITGB4; integrin-binding is required for IGF2 signaling. Interacts with IGFBP2. Proteolytically processed by PCSK4, proIGF2 is cleaved at Arg-128 and Arg-92 to generate big-IGF2 and mature IGF2.

The protein localises to the secreted. The insulin-like growth factors possess growth-promoting activity. Major fetal growth hormone in mammals. Plays a key role in regulating fetoplacental development. IGF2 is influenced by placental lactogen. Also involved in tissue differentiation. In adults, involved in glucose metabolism in adipose tissue, skeletal muscle and liver. Acts as a ligand for integrin which is required for IGF2 signaling. Positively regulates myogenic transcription factor MYOD1 function by facilitating the recruitment of transcriptional coactivators, thereby controlling muscle terminal differentiation. Inhibits myoblast differentiation and modulates metabolism via increasing the mitochondrial respiration rate. In terms of biological role, preptin undergoes glucose-mediated co-secretion with insulin, and acts as a physiological amplifier of glucose-mediated insulin secretion. Exhibits osteogenic properties by increasing osteoblast mitogenic activity through phosphoactivation of MAPK1 and MAPK3. In Ovis aries (Sheep), this protein is Insulin-like growth factor 2.